The primary structure comprises 501 residues: Ribose import ATP-binding protein RbsA (501 aa).

ABC transporter domains follow at residues 8–245 (LKMV…VGRT) and 255–500 (VKKG…VGIN). 40-47 (GENGAGKS) provides a ligand contact to ATP.

The protein belongs to the ABC transporter superfamily. Ribose importer (TC 3.A.1.2.1) family. The complex is composed of an ATP-binding protein (RbsA), two transmembrane proteins (RbsC) and a solute-binding protein (RbsB).

The protein resides in the cell membrane. It carries out the reaction D-ribose(out) + ATP + H2O = D-ribose(in) + ADP + phosphate + H(+). In terms of biological role, part of the ABC transporter complex RbsABC involved in ribose import. Responsible for energy coupling to the transport system. This Clostridium perfringens (strain 13 / Type A) protein is Ribose import ATP-binding protein RbsA.